A 437-amino-acid chain; its full sequence is Dihydrofolate synthase/folylpolyglutamate synthase (437 aa).

28-30 (DLG) contacts 7,8-dihydropteroate. 58–61 (GKGT) is a binding site for ATP. S82 serves as a coordination point for Mg(2+). Position 120–123 (120–123 (TYFE)) interacts with 7,8-dihydropteroate. Residue E144 participates in Mg(2+) binding. A 7,8-dihydropteroate-binding site is contributed by 151 to 153 (LDA). H171 lines the Mg(2+) pocket. ATP is bound by residues N255, R287, and D316.

Belongs to the folylpolyglutamate synthase family. In terms of assembly, monomer. The cofactor is Mg(2+).

It carries out the reaction 7,8-dihydropteroate + L-glutamate + ATP = 7,8-dihydrofolate + ADP + phosphate + H(+). The catalysed reaction is (6S)-5,6,7,8-tetrahydrofolyl-(gamma-L-Glu)(n) + L-glutamate + ATP = (6S)-5,6,7,8-tetrahydrofolyl-(gamma-L-Glu)(n+1) + ADP + phosphate + H(+). It catalyses the reaction 10-formyltetrahydrofolyl-(gamma-L-Glu)(n) + L-glutamate + ATP = 10-formyltetrahydrofolyl-(gamma-L-Glu)(n+1) + ADP + phosphate + H(+). The enzyme catalyses (6R)-5,10-methylenetetrahydrofolyl-(gamma-L-Glu)(n) + L-glutamate + ATP = (6R)-5,10-methylenetetrahydrofolyl-(gamma-L-Glu)(n+1) + ADP + phosphate + H(+). The protein operates within cofactor biosynthesis; tetrahydrofolate biosynthesis; 7,8-dihydrofolate from 2-amino-4-hydroxy-6-hydroxymethyl-7,8-dihydropteridine diphosphate and 4-aminobenzoate: step 2/2. It participates in cofactor biosynthesis; tetrahydrofolylpolyglutamate biosynthesis. Functions in two distinct reactions of the de novo folate biosynthetic pathway. Catalyzes the addition of a glutamate residue to dihydropteroate (7,8-dihydropteroate or H2Pte) to form dihydrofolate (7,8-dihydrofolate monoglutamate or H2Pte-Glu). Also catalyzes successive additions of L-glutamate to tetrahydrofolate or 10-formyltetrahydrofolate or 5,10-methylenetetrahydrofolate, leading to folylpolyglutamate derivatives. The protein is Dihydrofolate synthase/folylpolyglutamate synthase (folC) of Haemophilus influenzae (strain ATCC 51907 / DSM 11121 / KW20 / Rd).